The sequence spans 501 residues: GTPase Obg (501 aa).

One can recognise an Obg domain in the interval 2-159 (NRFIDRVVLH…HDLILELKSM (158 aa)). Residues 160 to 341 (ADVGLVGFPS…LKYKLLEIVQ (182 aa)) form the OBG-type G domain. Residues 166–173 (GFPSAGKS), 191–195 (FTTLQ), 212–215 (DVPG), 292–295 (NKAD), and 322–324 (SAV) contribute to the GTP site. Residues Ser173 and Thr193 each coordinate Mg(2+). Residues 362 to 442 (VDHRTKGQFQ…IGGISFEWEP (81 aa)) enclose the OCT domain.

The protein belongs to the TRAFAC class OBG-HflX-like GTPase superfamily. OBG GTPase family. Monomer. Mg(2+) serves as cofactor.

It is found in the cytoplasm. Functionally, an essential GTPase which binds GTP, GDP and possibly (p)ppGpp with moderate affinity, with high nucleotide exchange rates and a fairly low GTP hydrolysis rate. Plays a role in control of the cell cycle, stress response, ribosome biogenesis and in those bacteria that undergo differentiation, in morphogenesis control. In Corynebacterium glutamicum (strain R), this protein is GTPase Obg.